A 307-amino-acid chain; its full sequence is Serine/threonine-protein phosphatase PP2A-2 catalytic subunit (307 aa).

Positions 55, 57, 83, and 115 each coordinate Mn(2+). The Proton donor role is filled by His-116. Mn(2+)-binding residues include His-165 and His-239.

Belongs to the PPP phosphatase family. PP-2A subfamily. It depends on Mn(2+) as a cofactor.

The protein resides in the cytoplasm. It carries out the reaction O-phospho-L-seryl-[protein] + H2O = L-seryl-[protein] + phosphate. It catalyses the reaction O-phospho-L-threonyl-[protein] + H2O = L-threonyl-[protein] + phosphate. The chain is Serine/threonine-protein phosphatase PP2A-2 catalytic subunit (PP2A2) from Oryza sativa subsp. indica (Rice).